The chain runs to 455 residues: Cerebellar degeneration-related protein 2 (455 aa).

Coiled coils occupy residues 37–141 and 191–264; these read LLDR…SSQG and EEEN…QAEH. Over residues 132–142 the composition is skewed to polar residues; sequence VEELKSSSQGR. The interval 132-152 is disordered; it reads VEELKSSSQGRGRQKACDQEK. Position 310 is a phosphoserine (Ser310). Residues 395–419 form a disordered region; the sequence is SEAGASGWEPTPVSPESISSPTTTP. A compositionally biased stretch (low complexity) spans 403–419; sequence EPTPVSPESISSPTTTP.

It belongs to the CDR2 family. As to expression, expressed in brain and testis (at protein level). Expressed in the cerebellum, cerebral cortex, heart, lung, spleen, ovary, kidney and testis.

The sequence is that of Cerebellar degeneration-related protein 2 (Cdr2) from Mus musculus (Mouse).